The primary structure comprises 507 residues: Monoogygenase CPUR_05431 (507 aa).

It belongs to the PheA/TfdB FAD monooxygenase family. The cofactor is FAD.

It participates in pigment biosynthesis. Its function is as follows. Monoogygenase; part of the ergochrome gene cluster responsible for the typical purple-black color of the ergot sclerotia. The ergochrome gene cluster produces several ergot pigments including the yellow ergochrome secalonic acid and its derivatives, as well as the red anthraquinones endocrocin and clavorubin. The pathway begins with the synthesis of atrochrysone thioester by the polyketide synthase (PKS) CPUR_05437. The atrochrysone carboxyl ACP thioesterase CPUR_05436 then breaks the thioester bond and releases the atrochrysone carboxylic acid from CPUR_05437. The atrochrysone carboxylic acid is then converted to atrochrysone which is further transformed into emodin anthrone. The next step is performed by the anthrone oxygenase CPUR_05434 that catalyzes the oxidation of emodinanthrone to emodin. Emodin is further modified to yield monodictyphenone via several steps involving CPUR_05427, CPUR_05428, CPUR_05429 and CPUR_05430. The short chain dehydrogenase/reductase CPUR_05418 then catalyzes the C-5 ketoreduction to give the xanthone skeleton of the monomeric units. Ergochromes formation requires further dimerization steps of different xanthone units, probably catalyzed by the cytochrome P450 monooxygenase CPUR_05419. CPUR_05425, CPUR_05426 and CPUR_05431 are unique to Claviceps, thus it is likely that they are involved in further modification of xanthone units or in their dimerization. The yellow ergochromes and the red anthraquinone pigments endocrocin and clavorubin are products from the same PKS derived precursors and the latter are likely shunt products in the pathway of xanthone biosynthesis. It is proposed that atrochrysone carboxylic acid released from the PKS CPUR_05437 can also be converted to endocrocin anthrone which is further oxidized into endocrocin by CPUR_05435. Endocrocin could be then modified to clavorubin, possibly by CPUR_05423 and CPUR_05431. Clavorubin is the principal anthraquinone metabolite produced by the cluster with a much higher yield compared to endocrocin. The polypeptide is Monoogygenase CPUR_05431 (Claviceps purpurea (strain 20.1) (Ergot fungus)).